Here is a 162-residue protein sequence, read N- to C-terminus: Large ribosomal subunit protein bL17 (162 aa).

Residues 125 to 140 (AAKEAPAKEVAEEKAA) show a composition bias toward basic and acidic residues. Positions 125–162 (AAKEAPAKEVAEEKAAKPAKKAAPKKAEKEEAEDAAEA) are disordered.

It belongs to the bacterial ribosomal protein bL17 family. Part of the 50S ribosomal subunit. Contacts protein L32.

This is Large ribosomal subunit protein bL17 from Oleidesulfovibrio alaskensis (strain ATCC BAA-1058 / DSM 17464 / G20) (Desulfovibrio alaskensis).